The sequence spans 479 residues: Bifunctional protein HldE (479 aa).

The interval 1–322 (MIDDFRFGRI…RELLQEMPET (322 aa)) is ribokinase. Position 198-201 (198-201 (NRIE)) interacts with ATP. Residue aspartate 267 is part of the active site. Residues 347–479 (FTNGCFDLVH…LVRGMQSAPS (133 aa)) are cytidylyltransferase.

The protein in the N-terminal section; belongs to the carbohydrate kinase PfkB family. In the C-terminal section; belongs to the cytidylyltransferase family. In terms of assembly, homodimer.

The catalysed reaction is D-glycero-beta-D-manno-heptose 7-phosphate + ATP = D-glycero-beta-D-manno-heptose 1,7-bisphosphate + ADP + H(+). It catalyses the reaction D-glycero-beta-D-manno-heptose 1-phosphate + ATP + H(+) = ADP-D-glycero-beta-D-manno-heptose + diphosphate. It functions in the pathway nucleotide-sugar biosynthesis; ADP-L-glycero-beta-D-manno-heptose biosynthesis; ADP-L-glycero-beta-D-manno-heptose from D-glycero-beta-D-manno-heptose 7-phosphate: step 1/4. It participates in nucleotide-sugar biosynthesis; ADP-L-glycero-beta-D-manno-heptose biosynthesis; ADP-L-glycero-beta-D-manno-heptose from D-glycero-beta-D-manno-heptose 7-phosphate: step 3/4. Functionally, catalyzes the phosphorylation of D-glycero-D-manno-heptose 7-phosphate at the C-1 position to selectively form D-glycero-beta-D-manno-heptose-1,7-bisphosphate. Its function is as follows. Catalyzes the ADP transfer from ATP to D-glycero-beta-D-manno-heptose 1-phosphate, yielding ADP-D-glycero-beta-D-manno-heptose. This is Bifunctional protein HldE from Gluconobacter oxydans (strain 621H) (Gluconobacter suboxydans).